The sequence spans 356 residues: MKVRKSNNKPLKRSASFTSGTKTGSKSAKSVNSGSKSMKSTKSSSKSYKKIYEEFSDSESSNSEISDNDELSDNEISDNESSDDDEISDNESSDDDEISDNEISDDDGSDNNVYEDNDIRNIIIEDINDNYSKGKFGNFHVVIMKKNGYMNATKLCDNISNKYKNKKFKHWNENKNSKELIEELSNFLKLPKNELIILKKGGTNTEIRGSYAHPVLITHIAYWISPKFAVRIGFCMEEWKKFCEQNELDYYNMLNMAKPLNNNNKEKIIQHELREKYKGVIEIKTKSGYIDLLTDKYLVEIKDYRNWKSAIGQLLVYSVYYPKKIKCMYLFNVESNDINEIKTICFKYDIVLKIYD.

Positions 1–12 are enriched in basic residues; sequence MKVRKSNNKPLK. Residues 1–114 form a disordered region; the sequence is MKVRKSNNKP…DDDGSDNNVY (114 aa). Residues 14-46 are compositionally biased toward low complexity; that stretch reads SASFTSGTKTGSKSAKSVNSGSKSMKSTKSSSK. Acidic residues predominate over residues 66 to 114; it reads SDNDELSDNEISDNESSDDDEISDNESSDDDEISDNEISDDDGSDNNVY. Residues 130–239 enclose the KilA-N domain; the sequence is NYSKGKFGNF…VRIGFCMEEW (110 aa).

This is Putative KilA-N domain-containing protein R878 from Acanthamoeba polyphaga (Amoeba).